Here is a 474-residue protein sequence, read N- to C-terminus: NADH-ubiquinone oxidoreductase chain 4 (474 aa).

Helical transmembrane passes span 34 to 54 (SFFL…DLMF), 86 to 106 (LYGL…ISTV), 115 to 135 (LKFY…IKCS), 137 to 157 (LIAF…VVFF), 167 to 187 (AVIY…LACL), 211 to 231 (AMTI…IWPL), 242 to 262 (ASTG…LFGF), 276 to 295 (TFFL…NMWS), 302 to 322 (LVAY…LKGD), 325 to 345 (LIAY…LMFF), 373 to 393 (ALAI…LKFV), 405 to 425 (VSWP…LIGF), and 454 to 474 (YIIF…FLMI).

It belongs to the complex I subunit 4 family.

The protein resides in the mitochondrion membrane. It carries out the reaction a ubiquinone + NADH + 5 H(+)(in) = a ubiquinol + NAD(+) + 4 H(+)(out). In terms of biological role, core subunit of the mitochondrial membrane respiratory chain NADH dehydrogenase (Complex I) that is believed to belong to the minimal assembly required for catalysis. Complex I functions in the transfer of electrons from NADH to the respiratory chain. The immediate electron acceptor for the enzyme is believed to be ubiquinone. The sequence is that of NADH-ubiquinone oxidoreductase chain 4 (ND4) from Paramecium tetraurelia.